The chain runs to 223 residues: Thiamine-phosphate synthase (223 aa).

4-amino-2-methyl-5-(diphosphooxymethyl)pyrimidine contacts are provided by residues 47 to 51 (QLRDK) and Asn84. Mg(2+) contacts are provided by Asp85 and Asp104. A 4-amino-2-methyl-5-(diphosphooxymethyl)pyrimidine-binding site is contributed by Ser123. 150-152 (TPT) contacts 2-[(2R,5Z)-2-carboxy-4-methylthiazol-5(2H)-ylidene]ethyl phosphate. Position 153 (Lys153) interacts with 4-amino-2-methyl-5-(diphosphooxymethyl)pyrimidine. 2-[(2R,5Z)-2-carboxy-4-methylthiazol-5(2H)-ylidene]ethyl phosphate is bound at residue Gly182.

It belongs to the thiamine-phosphate synthase family. Mg(2+) serves as cofactor.

The enzyme catalyses 2-[(2R,5Z)-2-carboxy-4-methylthiazol-5(2H)-ylidene]ethyl phosphate + 4-amino-2-methyl-5-(diphosphooxymethyl)pyrimidine + 2 H(+) = thiamine phosphate + CO2 + diphosphate. The catalysed reaction is 2-(2-carboxy-4-methylthiazol-5-yl)ethyl phosphate + 4-amino-2-methyl-5-(diphosphooxymethyl)pyrimidine + 2 H(+) = thiamine phosphate + CO2 + diphosphate. It carries out the reaction 4-methyl-5-(2-phosphooxyethyl)-thiazole + 4-amino-2-methyl-5-(diphosphooxymethyl)pyrimidine + H(+) = thiamine phosphate + diphosphate. It functions in the pathway cofactor biosynthesis; thiamine diphosphate biosynthesis; thiamine phosphate from 4-amino-2-methyl-5-diphosphomethylpyrimidine and 4-methyl-5-(2-phosphoethyl)-thiazole: step 1/1. Its function is as follows. Condenses 4-methyl-5-(beta-hydroxyethyl)thiazole monophosphate (THZ-P) and 2-methyl-4-amino-5-hydroxymethyl pyrimidine pyrophosphate (HMP-PP) to form thiamine monophosphate (TMP). The chain is Thiamine-phosphate synthase from Saccharopolyspora erythraea (strain ATCC 11635 / DSM 40517 / JCM 4748 / NBRC 13426 / NCIMB 8594 / NRRL 2338).